The sequence spans 213 residues: Large ribosomal subunit protein uL3 (213 aa).

Gln-151 is subject to N5-methylglutamine.

The protein belongs to the universal ribosomal protein uL3 family. In terms of assembly, part of the 50S ribosomal subunit. Forms a cluster with proteins L14 and L19. Post-translationally, methylated by PrmB.

One of the primary rRNA binding proteins, it binds directly near the 3'-end of the 23S rRNA, where it nucleates assembly of the 50S subunit. This is Large ribosomal subunit protein uL3 from Rhizobium leguminosarum bv. trifolii (strain WSM2304).